The chain runs to 215 residues: Ran-specific GTPase-activating protein 1 (215 aa).

Basic and acidic residues-rich tracts occupy residues 1 to 18 (MSAE…EEQK) and 26 to 35 (VASKQTEEAK). Residues 1-78 (MSAEQEKKTQ…ASPEVHFEPI (78 aa)) are disordered. Phosphoserine is present on Ser70. The region spanning 74-210 (HFEPIVKLSA…FEKYQEENAK (137 aa)) is the RanBD1 domain.

It belongs to the RANBP1 family.

It localises to the cytoplasm. In terms of biological role, stimulates the GTPase activity in the presence of RNA1. May potentiate the action of RanGAP1 (RNA1), thus playing the role of a negative regulator. The sequence is that of Ran-specific GTPase-activating protein 1 (sbp1) from Schizosaccharomyces pombe (strain 972 / ATCC 24843) (Fission yeast).